The sequence spans 850 residues: Serine/threonine-protein phosphatase 6 regulatory subunit 3-B (850 aa).

3 disordered regions span residues 610–652 (NISY…VNHE), 683–778 (SDGS…MKET), and 793–850 (KSEE…NGPV). The segment covering 627 to 638 (DSEESTDSEEEE) has biased composition (acidic residues). Composition is skewed to polar residues over residues 703–731 (ASFS…TSTE) and 764–778 (DQMT…MKET). Residues 826-839 (PSSSSQEQRISEQI) show a composition bias toward low complexity.

Belongs to the SAPS family.

Regulatory subunit of protein phosphatase 6 (PP6). May function as a scaffolding PP6 subunit. The chain is Serine/threonine-protein phosphatase 6 regulatory subunit 3-B (ppp6r3-b) from Xenopus laevis (African clawed frog).